The chain runs to 377 residues: 4-hydroxy-tetrahydrodipicolinate synthase 2, chloroplastic (377 aa).

A chloroplast-targeting transit peptide spans 1–51 (MMAAQPTANPGVRLGWKAPGALASPPRLALSRSAAAPLASHRVGRGKFSAA). Residue threonine 120 coordinates pyruvate. Catalysis depends on tyrosine 206, which acts as the Proton donor/acceptor. Lysine 234 acts as the Schiff-base intermediate with substrate in catalysis. Isoleucine 273 lines the pyruvate pocket.

This sequence belongs to the DapA family. As to quaternary structure, tetramer of modified subunits derived from two genes in different combinations.

It localises to the plastid. The protein localises to the chloroplast. The enzyme catalyses L-aspartate 4-semialdehyde + pyruvate = (2S,4S)-4-hydroxy-2,3,4,5-tetrahydrodipicolinate + H2O + H(+). It functions in the pathway amino-acid biosynthesis; L-lysine biosynthesis via DAP pathway; (S)-tetrahydrodipicolinate from L-aspartate: step 3/4. Sensitive to lysine inhibition. This inhibition increase in an allosteric manner with increasing concentration of the inhibitor. In terms of biological role, catalyzes the condensation of (S)-aspartate-beta-semialdehyde [(S)-ASA] and pyruvate to 4-hydroxy-tetrahydrodipicolinate (HTPA). The sequence is that of 4-hydroxy-tetrahydrodipicolinate synthase 2, chloroplastic from Triticum aestivum (Wheat).